The sequence spans 570 residues: Nucleoprotein (570 aa).

The binding site for the cap structure m7GTP stretch occupies residues 54–241 (MRKEKRDDSD…IEPKKSAINI (188 aa)). The Mn(2+) site is built by D390 and E392. E400, C507, H510, and C530 together coordinate Zn(2+). D534 serves as a coordination point for Mn(2+).

This sequence belongs to the arenaviridae nucleocapsid protein family. In terms of assembly, homomultimerizes to form the nucleocapsid. Binds to viral genomic RNA. Interacts with glycoprotein G2. Interacts with protein Z; this interaction probably directs the encapsidated genome to budding sites. Interacts with protein L; this interaction does not interfere with Z-L interaction. Interacts with host IKBKE (via Protein kinase domain); the interaction inhibits IKBKE kinase activity.

Its subcellular location is the virion. The protein localises to the host cytoplasm. Encapsidates the genome, protecting it from nucleases. The encapsidated genomic RNA is termed the nucleocapsid (NC). Serves as template for viral transcription and replication. The increased presence of protein N in host cell does not seem to trigger the switch from transcription to replication as observed in other negative strain RNA viruses. Through the interaction with host IKBKE, strongly inhibits the phosphorylation and nuclear translocation of host IRF3, a protein involved in interferon activation pathway, leading to the inhibition of interferon-beta and IRF3-dependent promoters activation. Also encodes a functional 3'-5' exoribonuclease that degrades preferentially dsRNA substrates and thereby participates in the suppression of interferon induction. The sequence is that of Nucleoprotein from Mopeia virus (MOPV).